The primary structure comprises 460 residues: Serine--tRNA ligase (460 aa).

255–257 serves as a coordination point for L-serine; sequence TAE. Residues 286-288 and V302 contribute to the ATP site; that span reads RKE. E309 contributes to the L-serine binding site. 373–376 provides a ligand contact to ATP; that stretch reads EMVS. T409 contributes to the L-serine binding site.

The protein belongs to the class-II aminoacyl-tRNA synthetase family. Type-1 seryl-tRNA synthetase subfamily. In terms of assembly, homodimer. The tRNA molecule binds across the dimer.

It localises to the cytoplasm. The enzyme catalyses tRNA(Ser) + L-serine + ATP = L-seryl-tRNA(Ser) + AMP + diphosphate + H(+). The catalysed reaction is tRNA(Sec) + L-serine + ATP = L-seryl-tRNA(Sec) + AMP + diphosphate + H(+). Its pathway is aminoacyl-tRNA biosynthesis; selenocysteinyl-tRNA(Sec) biosynthesis; L-seryl-tRNA(Sec) from L-serine and tRNA(Sec): step 1/1. Catalyzes the attachment of serine to tRNA(Ser). Is also able to aminoacylate tRNA(Sec) with serine, to form the misacylated tRNA L-seryl-tRNA(Sec), which will be further converted into selenocysteinyl-tRNA(Sec). The sequence is that of Serine--tRNA ligase from Aeropyrum pernix (strain ATCC 700893 / DSM 11879 / JCM 9820 / NBRC 100138 / K1).